Consider the following 262-residue polypeptide: Tryptophan synthase alpha chain (262 aa).

Residues E51 and D62 each act as proton acceptor in the active site.

Belongs to the TrpA family. In terms of assembly, tetramer of two alpha and two beta chains.

The enzyme catalyses (1S,2R)-1-C-(indol-3-yl)glycerol 3-phosphate + L-serine = D-glyceraldehyde 3-phosphate + L-tryptophan + H2O. It functions in the pathway amino-acid biosynthesis; L-tryptophan biosynthesis; L-tryptophan from chorismate: step 5/5. Functionally, the alpha subunit is responsible for the aldol cleavage of indoleglycerol phosphate to indole and glyceraldehyde 3-phosphate. The chain is Tryptophan synthase alpha chain from Oceanobacillus iheyensis (strain DSM 14371 / CIP 107618 / JCM 11309 / KCTC 3954 / HTE831).